Here is a 178-residue protein sequence, read N- to C-terminus: CASP-like protein 4D1 (178 aa).

The residue at position 2 (A2) is an N-acetylalanine. At 2–14 the chain is on the cytoplasmic side; sequence APPPPAPPSVTLR. Residues 15 to 35 traverse the membrane as a helical segment; that stretch reads TVLLLLRVLTAAFLLITVVLI. Residues 36 to 60 are Extracellular-facing; that stretch reads STNTVTLEISSTSIKLPFNDVYAYR. The chain crosses the membrane as a helical span at residues 61-81; that stretch reads YMLSAAVIGLVYAVVQLFLTI. At 82–97 the chain is on the cytoplasmic side; it reads SQFATGKTHPLTYQFD. Residues 98 to 118 form a helical membrane-spanning segment; the sequence is FYGDKVISYLLATGSAAGFGV. At 119–149 the chain is on the extracellular side; that stretch reads SKDLKDTYIALIEFDSTDPVDKFFSKGYASA. The helical transmembrane segment at 150-170 threads the bilayer; the sequence is SLLLFAFVSLAVLSVFSSLAL. Residues 171–178 are Cytoplasmic-facing; it reads SKRPVPVS.

The protein belongs to the Casparian strip membrane proteins (CASP) family. Homodimer and heterodimers. As to expression, expressed in the root epidermis.

The protein localises to the cell membrane. This Arabidopsis thaliana (Mouse-ear cress) protein is CASP-like protein 4D1.